The primary structure comprises 274 residues: Proteasome subunit beta (274 aa).

The propeptide at 1–52 is removed in mature form; by autocatalysis; that stretch reads MADPMGGAGRLPAVFMTPGTSSFTDFLSQSAPHLLPGARGGLPGPVTEVAHG. The active-site Nucleophile is T53.

Belongs to the peptidase T1B family. The 20S proteasome core is composed of 14 alpha and 14 beta subunits that assemble into four stacked heptameric rings, resulting in a barrel-shaped structure. The two inner rings, each composed of seven catalytic beta subunits, are sandwiched by two outer rings, each composed of seven alpha subunits. The catalytic chamber with the active sites is on the inside of the barrel. Has a gated structure, the ends of the cylinder being occluded by the N-termini of the alpha-subunits. Is capped by the proteasome-associated ATPase, ARC.

The protein localises to the cytoplasm. It catalyses the reaction Cleavage of peptide bonds with very broad specificity.. It participates in protein degradation; proteasomal Pup-dependent pathway. The formation of the proteasomal ATPase ARC-20S proteasome complex, likely via the docking of the C-termini of ARC into the intersubunit pockets in the alpha-rings, may trigger opening of the gate for substrate entry. Interconversion between the open-gate and close-gate conformations leads to a dynamic regulation of the 20S proteasome proteolysis activity. In terms of biological role, component of the proteasome core, a large protease complex with broad specificity involved in protein degradation. The sequence is that of Proteasome subunit beta from Frankia alni (strain DSM 45986 / CECT 9034 / ACN14a).